A 127-amino-acid chain; its full sequence is Glycine cleavage system H protein (127 aa).

Positions 22–104 (TVRIGITDFA…YDKAWMIVIE (83 aa)) constitute a Lipoyl-binding domain. Lysine 63 bears the N6-lipoyllysine mark.

Belongs to the GcvH family. In terms of assembly, the glycine cleavage system is composed of four proteins: P, T, L and H. It depends on (R)-lipoate as a cofactor.

Its function is as follows. The glycine cleavage system catalyzes the degradation of glycine. The H protein shuttles the methylamine group of glycine from the P protein to the T protein. Functionally, is also involved in protein lipoylation via its role as an octanoyl/lipoyl carrier protein intermediate. This chain is Glycine cleavage system H protein, found in Anoxybacillus flavithermus (strain DSM 21510 / WK1).